The chain runs to 124 residues: Small ribosomal subunit protein uS12 (124 aa).

D89 carries the 3-methylthioaspartic acid modification.

This sequence belongs to the universal ribosomal protein uS12 family. As to quaternary structure, part of the 30S ribosomal subunit. Contacts proteins S8 and S17. May interact with IF1 in the 30S initiation complex.

Functionally, with S4 and S5 plays an important role in translational accuracy. Interacts with and stabilizes bases of the 16S rRNA that are involved in tRNA selection in the A site and with the mRNA backbone. Located at the interface of the 30S and 50S subunits, it traverses the body of the 30S subunit contacting proteins on the other side and probably holding the rRNA structure together. The combined cluster of proteins S8, S12 and S17 appears to hold together the shoulder and platform of the 30S subunit. The protein is Small ribosomal subunit protein uS12 of Shewanella amazonensis (strain ATCC BAA-1098 / SB2B).